Here is a 485-residue protein sequence, read N- to C-terminus: Glutamate--tRNA ligase (485 aa).

The 'HIGH' region motif lies at 11–21 (PSPTGHLHIGN). The short motif at 252 to 256 (KLSKR) is the 'KMSKS' region element. Lys255 serves as a coordination point for ATP.

The protein belongs to the class-I aminoacyl-tRNA synthetase family. Glutamate--tRNA ligase type 1 subfamily. In terms of assembly, monomer.

It is found in the cytoplasm. It catalyses the reaction tRNA(Glu) + L-glutamate + ATP = L-glutamyl-tRNA(Glu) + AMP + diphosphate. Catalyzes the attachment of glutamate to tRNA(Glu) in a two-step reaction: glutamate is first activated by ATP to form Glu-AMP and then transferred to the acceptor end of tRNA(Glu). The polypeptide is Glutamate--tRNA ligase (Bacillus mycoides (strain KBAB4) (Bacillus weihenstephanensis)).